The primary structure comprises 479 residues: MSSPGIDGDPKPPCLPRNGLVKLPGQPNGLGAASITKGTPATKNRPCQPPPPPTLPPPSLAAPLSRAALAGGPCTPAGGPASALAPGHPAERPPLATDEKILNGLFWYFSACEKCVLAQVCKAWRRVLYQPKFWAGLTPVLHAKELYNVLPGGEKEFVNLQGFAARGFEGFCLVGVSDLDICEFIDNYALSKKGVKAMSLKRSTITDAGLEVMLEQMQGVVRLELSGCNDFTEAGLWSSLSARITSLSVSDCINVADDAIAAISQLLPNLAELSLQAYHVTDTALAYFTARQGHSTHTLRLLSCWEITNHGVVNVVHSLPNLTALSLSGCSKVTDDGVELVAENLRKLRSLDLSWCPRITDMALEYVACDLHRLEELVLDRCVRITDTGLSYLSTMSSLRSLYLRWCCQVQDFGLKHLLALGSLRLLSLAGCPLLTTTGLSGLVQLQELEELELTNCPGATPELFKYFSQHLPRCLVIE.

A disordered region spans residues 1–62 (MSSPGIDGDP…PTLPPPSLAA (62 aa)). The span at 47 to 60 (CQPPPPPTLPPPSL) shows a compositional bias: pro residues. Arg-92 carries the omega-N-methylarginine modification. An F-box domain is found at 94 to 139 (PLATDEKILNGLFWYFSACEKCVLAQVCKAWRRVLYQPKFWAGLTP). LRR repeat units follow at residues 244-266 (ITSLSVSDCINVADDAIAAISQL), 267-290 (LPNLAELSLQAYHVTDTALAYFTA), 319-343 (LPNLTALSLSGCSKVTDDGVELVAE), 345-369 (LRKLRSLDLSWCPRITDMALEYVAC), 371-395 (LHRLEELVLDRCVRITDTGLSYLST), 396-420 (MSSLRSLYLRWCCQVQDFGLKHLLA), and 446-470 (LQELEELELTNCPGATPELFKYFSQ).

In terms of assembly, interacts with SKP1 and CUL1.

Functionally, substrate-recognition component of the SCF (SKP1-CUL1-F-box protein)-type E3 ubiquitin ligase complex. This is F-box/LRR-repeat protein 16 (FBXL16) from Homo sapiens (Human).